Reading from the N-terminus, the 118-residue chain is MPFVELDTNLQQQEVPQDLAEKLCSATATILGKPRERVNVTVRTGVSMVVGGSSAPCTQLIISSIGVVGTAEQNKEHSAKFFNFLTEQLGLAQDRILLRFVPLEPWQIGKNGTVMTFL.

At Pro2 the chain carries N-acetylproline.

It belongs to the MIF family. In terms of assembly, homotrimer.

Its subcellular location is the cytoplasm. It catalyses the reaction D-dopachrome + H(+) = 5,6-dihydroxyindole + CO2. Its function is as follows. Tautomerization of D-dopachrome with decarboxylation to give 5,6-dihydroxyindole (DHI). In Xenopus laevis (African clawed frog), this protein is D-dopachrome decarboxylase-B (ddt-b).